A 428-amino-acid polypeptide reads, in one-letter code: NADP-specific glutamate dehydrogenase (428 aa).

Substrate is bound by residues lysine 68 and lysine 92. Lysine 104 functions as the Proton donor in the catalytic mechanism. The NADP(+) site is built by threonine 188 and asparagine 219. Serine 356 is a substrate binding site.

Belongs to the Glu/Leu/Phe/Val dehydrogenases family. In terms of assembly, homohexamer.

It carries out the reaction L-glutamate + NADP(+) + H2O = 2-oxoglutarate + NH4(+) + NADPH + H(+). Functionally, catalyzes the reversible oxidative deamination of glutamate to alpha-ketoglutarate and ammonia. This Synechocystis sp. (strain ATCC 27184 / PCC 6803 / Kazusa) protein is NADP-specific glutamate dehydrogenase (gdhA).